The following is a 560-amino-acid chain: 2-succinyl-5-enolpyruvyl-6-hydroxy-3-cyclohexene-1-carboxylate synthase (560 aa).

This sequence belongs to the TPP enzyme family. MenD subfamily. In terms of assembly, homodimer. Mg(2+) is required as a cofactor. The cofactor is Mn(2+). Thiamine diphosphate serves as cofactor.

The enzyme catalyses isochorismate + 2-oxoglutarate + H(+) = 5-enolpyruvoyl-6-hydroxy-2-succinyl-cyclohex-3-ene-1-carboxylate + CO2. The protein operates within quinol/quinone metabolism; 1,4-dihydroxy-2-naphthoate biosynthesis; 1,4-dihydroxy-2-naphthoate from chorismate: step 2/7. It functions in the pathway quinol/quinone metabolism; menaquinone biosynthesis. Catalyzes the thiamine diphosphate-dependent decarboxylation of 2-oxoglutarate and the subsequent addition of the resulting succinic semialdehyde-thiamine pyrophosphate anion to isochorismate to yield 2-succinyl-5-enolpyruvyl-6-hydroxy-3-cyclohexene-1-carboxylate (SEPHCHC). The protein is 2-succinyl-5-enolpyruvyl-6-hydroxy-3-cyclohexene-1-carboxylate synthase of Lactococcus lactis subsp. lactis (strain IL1403) (Streptococcus lactis).